Here is a 1264-residue protein sequence, read N- to C-terminus: TBC1 domain family member 9 (1264 aa).

GRAM domains are found at residues 146–213 and 293–361; these read VKFH…EKNA and ERYR…EKAD. The interval 410-456 is disordered; it reads KEFSGSCNSSDDEVYSRPSSLVSSSPQRSTSSDADGERPFNLNGNSV. Positions 425-441 are enriched in low complexity; that stretch reads SRPSSLVSSSPQRSTSS. A Rab-GAP TBC domain is found at 515–702; the sequence is GIPESMRGEL…VVVDCFFYEG (188 aa). The EF-hand domain maps to 886–921; that stretch reads HSDVLASRLFQLLDENGDSLINFREFVSGLSAACHG. The segment covering 1119 to 1138 has biased composition (basic and acidic residues); that stretch reads SEEHSLGGQMEDIKLEDSSP. The tract at residues 1119–1162 is disordered; the sequence is SEEHSLGGQMEDIKLEDSSPRDNGACSSMLISDDDTKDDSSMSS.

Its function is as follows. May act as a GTPase-activating protein for Rab family protein(s). The polypeptide is TBC1 domain family member 9 (Tbc1d9) (Mus musculus (Mouse)).